Reading from the N-terminus, the 92-residue chain is Small ribosomal subunit protein uS19 (92 aa).

This sequence belongs to the universal ribosomal protein uS19 family.

Functionally, protein S19 forms a complex with S13 that binds strongly to the 16S ribosomal RNA. The polypeptide is Small ribosomal subunit protein uS19 (Proteus mirabilis (strain HI4320)).